A 275-amino-acid polypeptide reads, in one-letter code: Large ribosomal subunit protein uL2 (275 aa).

The segment at 223-275 is disordered; it reads VAMNPVDHPHGGGEGRTSGGRHPVTPWGVPTKGYKTRSNKRTDKYIVRRRNKK.

This sequence belongs to the universal ribosomal protein uL2 family. As to quaternary structure, part of the 50S ribosomal subunit. Forms a bridge to the 30S subunit in the 70S ribosome.

Functionally, one of the primary rRNA binding proteins. Required for association of the 30S and 50S subunits to form the 70S ribosome, for tRNA binding and peptide bond formation. It has been suggested to have peptidyltransferase activity; this is somewhat controversial. Makes several contacts with the 16S rRNA in the 70S ribosome. This chain is Large ribosomal subunit protein uL2, found in Shewanella loihica (strain ATCC BAA-1088 / PV-4).